We begin with the raw amino-acid sequence, 400 residues long: Acetylornithine aminotransferase (400 aa).

Residues glycine 102–alanine 103 and phenylalanine 135 each bind pyridoxal 5'-phosphate. Arginine 138 contacts N(2)-acetyl-L-ornithine. Aspartate 220–glutamine 223 provides a ligand contact to pyridoxal 5'-phosphate. Lysine 249 carries the post-translational modification N6-(pyridoxal phosphate)lysine. Serine 276 contributes to the N(2)-acetyl-L-ornithine binding site. A pyridoxal 5'-phosphate-binding site is contributed by threonine 277.

The protein belongs to the class-III pyridoxal-phosphate-dependent aminotransferase family. ArgD subfamily. Homodimer. The cofactor is pyridoxal 5'-phosphate.

Its subcellular location is the cytoplasm. It carries out the reaction N(2)-acetyl-L-ornithine + 2-oxoglutarate = N-acetyl-L-glutamate 5-semialdehyde + L-glutamate. Its pathway is amino-acid biosynthesis; L-arginine biosynthesis; N(2)-acetyl-L-ornithine from L-glutamate: step 4/4. In Gloeobacter violaceus (strain ATCC 29082 / PCC 7421), this protein is Acetylornithine aminotransferase.